Consider the following 605-residue polypeptide: Pyruvate decarboxylase 1 (605 aa).

Asp67 and His154 together coordinate substrate. The tract at residues Asp432–Ile514 is thiamine pyrophosphate binding. Residues Asp482, Asn509, and Gly511 each coordinate Mg(2+). Glu515 is a binding site for substrate.

Belongs to the TPP enzyme family. Homotetramer. A metal cation serves as cofactor. Thiamine diphosphate is required as a cofactor.

The catalysed reaction is a 2-oxocarboxylate + H(+) = an aldehyde + CO2. This chain is Pyruvate decarboxylase 1 (PDC1), found in Oryza sativa subsp. japonica (Rice).